A 341-amino-acid chain; its full sequence is MIEASELTKVYKTKKKRVIGVDNVSFKVGKGEIFGIVGYSGAGKSSLLRCINLLERPTSGTIRVDGLDLTKLGTRELRQARLKIGMIFQHFYLINQKTVFGNIAFALKAAGVRADLIPARVEELLELVGLSNKRNAYPAQLSGGQKQRVGIARALANKPSVLLCDEATSALDPTTTKSILALLKKLNEELGLTIVLITHEMAVVKEICHKMAIMQDGKMIEQGDVYDVFAAPKAPLTQEFIGDVVSFHIPEHTLSQFSGTIAKVIFKGSVAQQGIISDTLQQFSVKGNFLHGAIEYIGGRPLGIFIMELKGEPTAIQEAIAYIKQRSAEVEVIRDGLRAFS.

The ABC transporter domain maps to 2–241 (IEASELTKVY…PKAPLTQEFI (240 aa)). Residue 38 to 45 (GYSGAGKS) coordinates ATP.

It belongs to the ABC transporter superfamily. Methionine importer (TC 3.A.1.24) family. In terms of assembly, the complex is composed of two ATP-binding proteins (MetN), two transmembrane proteins (MetI) and a solute-binding protein (MetQ).

The protein localises to the cell membrane. It catalyses the reaction L-methionine(out) + ATP + H2O = L-methionine(in) + ADP + phosphate + H(+). The enzyme catalyses D-methionine(out) + ATP + H2O = D-methionine(in) + ADP + phosphate + H(+). Its function is as follows. Part of the ABC transporter complex MetNIQ involved in methionine import. Responsible for energy coupling to the transport system. This chain is Methionine import ATP-binding protein MetN 2, found in Shouchella clausii (strain KSM-K16) (Alkalihalobacillus clausii).